The chain runs to 219 residues: Orotate phosphoribosyltransferase (219 aa).

Lys-26 serves as a coordination point for 5-phospho-alpha-D-ribose 1-diphosphate. Residue 34 to 35 (FF) participates in orotate binding. 5-phospho-alpha-D-ribose 1-diphosphate contacts are provided by residues 72–73 (YK), Arg-98, Lys-99, Lys-102, His-104, and 124–132 (DDVITAGTA). Orotate contacts are provided by Thr-128 and Arg-156.

This sequence belongs to the purine/pyrimidine phosphoribosyltransferase family. PyrE subfamily. As to quaternary structure, homodimer. It depends on Mg(2+) as a cofactor.

It carries out the reaction orotidine 5'-phosphate + diphosphate = orotate + 5-phospho-alpha-D-ribose 1-diphosphate. The protein operates within pyrimidine metabolism; UMP biosynthesis via de novo pathway; UMP from orotate: step 1/2. Its function is as follows. Catalyzes the transfer of a ribosyl phosphate group from 5-phosphoribose 1-diphosphate to orotate, leading to the formation of orotidine monophosphate (OMP). The sequence is that of Orotate phosphoribosyltransferase from Stenotrophomonas maltophilia (strain K279a).